Consider the following 330-residue polypeptide: GTPase Obg (330 aa).

In terms of domain architecture, Obg spans 1 to 159; that stretch reads MHFIDEVKIY…MWIHLSLKLL (159 aa). Residues 160–327 enclose the OBG-type G domain; sequence SDVGLVGLPN…IVKLALETIK (168 aa). Residues 166-173, 191-195, 212-215, 279-282, and 308-310 each bind GTP; these read GLPNAGKS, FTTLV, DIPG, NKCD, and STC. Residues Ser173 and Thr193 each coordinate Mg(2+).

This sequence belongs to the TRAFAC class OBG-HflX-like GTPase superfamily. OBG GTPase family. Monomer. Requires Mg(2+) as cofactor.

The protein localises to the cytoplasm. In terms of biological role, an essential GTPase which binds GTP, GDP and possibly (p)ppGpp with moderate affinity, with high nucleotide exchange rates and a fairly low GTP hydrolysis rate. Plays a role in control of the cell cycle, stress response, ribosome biogenesis and in those bacteria that undergo differentiation, in morphogenesis control. The chain is GTPase Obg from Rickettsia conorii (strain ATCC VR-613 / Malish 7).